Here is a 148-residue protein sequence, read N- to C-terminus: Ribonuclease H (148 aa).

The 142-residue stretch at 3 to 144 (DKEQVVIYTD…ADQLANRGVA (142 aa)) folds into the RNase H type-1 domain. The Mg(2+) site is built by aspartate 12, glutamate 50, aspartate 72, and aspartate 136. A disordered region spans residues 125–148 (GHTGDPGNERADQLANRGVAELPR).

It belongs to the RNase H family. Monomer. The cofactor is Mg(2+).

It localises to the cytoplasm. It catalyses the reaction Endonucleolytic cleavage to 5'-phosphomonoester.. Endonuclease that specifically degrades the RNA of RNA-DNA hybrids. In Pseudomonas paraeruginosa (strain DSM 24068 / PA7) (Pseudomonas aeruginosa (strain PA7)), this protein is Ribonuclease H.